Reading from the N-terminus, the 533-residue chain is Protein translocase subunit SecD (533 aa).

The next 6 membrane-spanning stretches (helical) occupy residues 8–28 (ALLV…TFVS), 377–397 (IVGG…GGVV), 400–420 (LALA…GFTL), 422–442 (LPGI…NVLI), 469–489 (LTIL…LQFG), and 495–515 (GFAV…IFVT).

This sequence belongs to the SecD/SecF family. SecD subfamily. In terms of assembly, forms a complex with SecF. Part of the essential Sec protein translocation apparatus which comprises SecA, SecYEG and auxiliary proteins SecDF-YajC and YidC.

It is found in the cell inner membrane. In terms of biological role, part of the Sec protein translocase complex. Interacts with the SecYEG preprotein conducting channel. SecDF uses the proton motive force (PMF) to complete protein translocation after the ATP-dependent function of SecA. This Syntrophobacter fumaroxidans (strain DSM 10017 / MPOB) protein is Protein translocase subunit SecD.